The chain runs to 306 residues: Nuclear egress protein 1 (306 aa).

The tract at residues 1–49 is disordered; that stretch reads MYDTDPHRRGSRPGPYHGKERRRSRSSAAGGTLGVVRRASRKSLPPHAR. Residues 106-225 form a CCCH-type zinc finger; sequence CLTLSGMGYY…YVIFPGTSAH (120 aa).

Belongs to the herpesviridae NEC1 protein family. As to quaternary structure, forms a heterohexameric complex with NEC2. Interacts with capsid vertex specific component 2/CVC2; this interaction directs the capsid to the host inner nuclear membrane to initiate budding. Post-translationally, phosphorylated at serine residues in the N-terminus. This phosphorylation regulates the localization within the inner nuclear membrane.

Its subcellular location is the host nucleus inner membrane. In terms of biological role, plays an essential role in virion nuclear egress, the first step of virion release from infected cell. Within the host nucleus, NEC1 interacts with the newly formed capsid through the vertexes and directs it to the inner nuclear membrane by associating with NEC2. Induces the budding of the capsid at the inner nuclear membrane as well as its envelopment into the perinuclear space. There, the NEC1/NEC2 complex promotes the fusion of the enveloped capsid with the outer nuclear membrane and the subsequent release of the viral capsid into the cytoplasm where it will reach the secondary budding sites in the host Golgi or trans-Golgi network. The polypeptide is Nuclear egress protein 1 (Human herpesvirus 1 (strain 17) (HHV-1)).